An 89-amino-acid polypeptide reads, in one-letter code: Small ribosomal subunit protein uS14 (89 aa).

Belongs to the universal ribosomal protein uS14 family. Part of the 30S ribosomal subunit. Contacts proteins S3 and S10.

In terms of biological role, binds 16S rRNA, required for the assembly of 30S particles and may also be responsible for determining the conformation of the 16S rRNA at the A site. This chain is Small ribosomal subunit protein uS14, found in Acholeplasma laidlawii (strain PG-8A).